Reading from the N-terminus, the 98-residue chain is NADH-ubiquinone oxidoreductase chain 4L (98 aa).

3 consecutive transmembrane segments (helical) span residues 1–21, 29–49, and 61–81; these read MSIT…GMFV, SLLC…IVSL, and VILL…LIMV.

This sequence belongs to the complex I subunit 4L family. In terms of assembly, core subunit of respiratory chain NADH dehydrogenase (Complex I) which is composed of 45 different subunits.

Its subcellular location is the mitochondrion inner membrane. It catalyses the reaction a ubiquinone + NADH + 5 H(+)(in) = a ubiquinol + NAD(+) + 4 H(+)(out). In terms of biological role, core subunit of the mitochondrial membrane respiratory chain NADH dehydrogenase (Complex I) which catalyzes electron transfer from NADH through the respiratory chain, using ubiquinone as an electron acceptor. Part of the enzyme membrane arm which is embedded in the lipid bilayer and involved in proton translocation. The polypeptide is NADH-ubiquinone oxidoreductase chain 4L (MT-ND4L) (Ochotona princeps (Southern American pika)).